The following is a 124-amino-acid chain: Small ribosomal subunit protein uS12 (124 aa).

D89 is modified (3-methylthioaspartic acid).

It belongs to the universal ribosomal protein uS12 family. In terms of assembly, part of the 30S ribosomal subunit. Contacts proteins S8 and S17. May interact with IF1 in the 30S initiation complex.

Its function is as follows. With S4 and S5 plays an important role in translational accuracy. In terms of biological role, interacts with and stabilizes bases of the 16S rRNA that are involved in tRNA selection in the A site and with the mRNA backbone. Located at the interface of the 30S and 50S subunits, it traverses the body of the 30S subunit contacting proteins on the other side and probably holding the rRNA structure together. The combined cluster of proteins S8, S12 and S17 appears to hold together the shoulder and platform of the 30S subunit. The chain is Small ribosomal subunit protein uS12 from Erwinia amylovora (Fire blight bacteria).